The primary structure comprises 513 residues: Sodium/potassium/calcium exchanger 5 (513 aa).

The N-terminal stretch at 1–35 (MRTDVFLQRRKRRDVLLSIIALLLLIFAIVHLVFC) is a signal peptide. Residues 36-78 (AGLSFQGSSSARVRRDLENASECVQPQSSEFPEGFFTVQERKD) are Extracellular-facing. Residues 79 to 99 (GGILIYFMIIFYMLLSVSIVC) traverse the membrane as a helical segment. The Cytoplasmic portion of the chain corresponds to 100–123 (DEYFLPSLEVISERLGLSQDVAGA). The helical transmembrane segment at 124-144 (TFMAAGSSAPELVTAFLGVFV) threads the bilayer. At 145 to 148 (TKGD) the chain is on the extracellular side. Residues 149-169 (IGVSTIMGSAVYNLLCICAAC) traverse the membrane as a helical segment. Topologically, residues 170 to 181 (GLLSSAVGRLSC) are cytoplasmic. A helical membrane pass occupies residues 182 to 202 (WPLFRDCVAYAISVAAVIAII). At 203 to 207 (SDNRV) the chain is on the extracellular side. The chain crosses the membrane as a helical span at residues 208–228 (YWYDGACLLLVYGVYVAVLCF). Residues 229-315 (DLRISEYVMQ…KSVFSMPDHD (87 aa)) lie on the Cytoplasmic side of the membrane. A helical transmembrane segment spans residues 316-336 (LKRILWVLSLPVSTLLFVSVP). Residues 337–350 (DCRRPFWKNFYMLT) lie on the Extracellular side of the membrane. Residues 351–371 (FLMSAVWISAFTYVLVWMVTI) form a helical membrane-spanning segment. Residues 372–381 (VGETLGIPDT) are Cytoplasmic-facing. The helical transmembrane segment at 382 to 402 (VMGMTLLAAGTSIPDTVASVM) threads the bilayer. The Extracellular segment spans residues 403 to 420 (VAREGKSDMAMSNIVGSN). The chain crosses the membrane as a helical span at residues 421-441 (VFDMLCLGLPWFIQTVFVDVG). Over 442–450 (SPVEVNSSG) the chain is Cytoplasmic. The chain crosses the membrane as a helical span at residues 451–471 (LVFMSCTLLLSIIFLFLAVHI). At 472–482 (NGWKLDWKLGL) the chain is on the extracellular side. Residues 483–503 (VCLACYILFATLSILYELGII) form a helical membrane-spanning segment. The Cytoplasmic segment spans residues 504–513 (GNNPIRSCSD).

It belongs to the Ca(2+):cation antiporter (CaCA) (TC 2.A.19) family. SLC24A subfamily. Highly expressed in melanin-producing cells. Colocalizes with melanin biosynthesis marker dct.

Its subcellular location is the golgi apparatus. The protein resides in the trans-Golgi network membrane. The protein localises to the melanosome. It carries out the reaction Ca(2+)(out) + K(+)(out) + 4 Na(+)(in) = Ca(2+)(in) + K(+)(in) + 4 Na(+)(out). Calcium, potassium:sodium antiporter that transports 1 Ca(2+) and 1 K(+) to the melanosome in exchange for 4 cytoplasmic Na(+). Involved in pigmentation, possibly by participating in ion transport in melanosomes. Predominant sodium-calcium exchanger in melanocytes. The sequence is that of Sodium/potassium/calcium exchanger 5 (slc24a5) from Danio rerio (Zebrafish).